The sequence spans 534 residues: Benzaldehyde dehydrogenase, mitochondrial (534 aa).

The transit peptide at 1-29 (MAAHRFSSLLSRSVPLLSRGGKQSYLGRG) directs the protein to the mitochondrion. Residues 199–202 (IPWN), 225–228 (KTAE), 258–259 (GP), 278–279 (GS), and 301–303 (ELG) each bind NAD(+). Glu-301 functions as the Proton acceptor in the catalytic mechanism. The Nucleophile role is filled by Cys-335. NAD(+) is bound by residues 381-385 (DQFEK) and 432-434 (EIF).

The protein belongs to the aldehyde dehydrogenase family. As to quaternary structure, homotetramer. Expressed predominantly in the upper and lower flower petal lobes, and, at low levels, in flower tubes, pistils, stamens and sepals.

It is found in the mitochondrion. It carries out the reaction an aldehyde + NAD(+) + H2O = a carboxylate + NADH + 2 H(+). It catalyses the reaction acetaldehyde + NAD(+) + H2O = acetate + NADH + 2 H(+). The enzyme catalyses benzaldehyde + NAD(+) + H2O = benzoate + NADH + 2 H(+). The catalysed reaction is 2-phenylacetaldehyde + NAD(+) + H2O = 2-phenylacetate + NADH + 2 H(+). It participates in aromatic compound metabolism. Inhibited by disulfiram. Functionally, component of the floral volatile benzenoid/phenylpropanoid (FVBP) biosynthetic pathway. Catalyzes the oxidation of benzaldehyde to benzoic acid (BA). Capable of oxidizing a broad spectrum of aliphatic aldehydes; increased carbon chain length results in a decrease in its efficiency. This Antirrhinum majus (Garden snapdragon) protein is Benzaldehyde dehydrogenase, mitochondrial.